The chain runs to 56 residues: Small ribosomal subunit protein eS31 (56 aa).

Cysteine 28, cysteine 31, cysteine 46, and cysteine 49 together coordinate Zn(2+). The segment at 28–49 adopts a C4-type zinc-finger fold; sequence CPRCGPGVFMANHKDRWSCGRC.

The protein belongs to the eukaryotic ribosomal protein eS31 family. Part of the 30S ribosomal subunit. It depends on Zn(2+) as a cofactor.

The polypeptide is Small ribosomal subunit protein eS31 (Thermococcus gammatolerans (strain DSM 15229 / JCM 11827 / EJ3)).